The following is a 201-amino-acid chain: Lipopolysaccharide core heptose(II)-phosphate phosphatase (201 aa).

Residues 1-35 (MLAFTLRFIKNKRYLATLAGALVIIAGLTSQHAWS) form the signal peptide.

The protein belongs to the phosphoglycerate mutase family. Ais subfamily.

The protein resides in the periplasm. It participates in bacterial outer membrane biogenesis; lipopolysaccharide metabolism. Its function is as follows. Catalyzes the dephosphorylation of heptose(II) of the outer membrane lipopolysaccharide core. The polypeptide is Lipopolysaccharide core heptose(II)-phosphate phosphatase (Salmonella schwarzengrund (strain CVM19633)).